A 345-amino-acid polypeptide reads, in one-letter code: MSKMPKNQNLDIERKQDHIEINLMKNVASTLTSGFESMQFIHNALPEINYDSIDTTSTFLGKSLQAPILISSMTGGTTRAGDINYRLAQAAQKAGIAMGLGSMRVLLTKPDTITTFAVRDVAPDIPLLANIGAVQLNYFVTPKECQYLVDVVKADALILHLNVLQELTQPEGNRNWENLLPKIKELVNYLSVPVIVKEVGYGLSKKVAESLIGVGVKVLDIAGSGGTSWSQVEAYRATNSLQNRIASSFINWGIPTLDSLKMVREVSGDIPIIASGGLKSGIDGAKAIRMGANIFGLAGQFLKAADTSESLLSEEVQLIIEQLKITMLCTGSRTLKDLAKAEIRL.

Residue 14-15 coordinates substrate; sequence RK. Residues serine 71, 72–74, serine 102, and asparagine 130 contribute to the FMN site; that span reads SMT. Residue 102–104 participates in substrate binding; the sequence is SMR. Glutamine 165 lines the substrate pocket. Glutamate 166 serves as a coordination point for Mg(2+). Residues lysine 197, threonine 227, 277–279, and 298–299 contribute to the FMN site; these read GLK and AG.

The protein belongs to the IPP isomerase type 2 family. As to quaternary structure, homooctamer. Dimer of tetramers. FMN serves as cofactor. The cofactor is NADPH. It depends on Mg(2+) as a cofactor.

It localises to the cytoplasm. The catalysed reaction is isopentenyl diphosphate = dimethylallyl diphosphate. Its function is as follows. Involved in the biosynthesis of isoprenoids. Catalyzes the 1,3-allylic rearrangement of the homoallylic substrate isopentenyl (IPP) to its allylic isomer, dimethylallyl diphosphate (DMAPP). This is Isopentenyl-diphosphate delta-isomerase from Rickettsia felis (strain ATCC VR-1525 / URRWXCal2) (Rickettsia azadi).